A 718-amino-acid chain; its full sequence is Quinolinate synthase, chloroplastic (718 aa).

The span at 1-22 (MALALSVAPTSSSLSSLLSRTP) shows a compositional bias: low complexity. The tract at residues 1–29 (MALALSVAPTSSSLSSLLSRTPNPSPNFR) is disordered. The N-terminal 70 residues, 1 to 70 (MALALSVAPT…VNASPFSISA (70 aa)), are a transit peptide targeting the chloroplast. The Cysteine persulfide intermediate role is filled by Cys132. The iminosuccinate site is built by His280 and Ser306. Cys360 provides a ligand contact to [4Fe-4S] cluster. Residues 389–391 (YIN) and Ser411 contribute to the iminosuccinate site. Cys484 is a [4Fe-4S] cluster binding site. Iminosuccinate contacts are provided by residues 510 to 512 (HLE) and Thr535. Cys640 is a binding site for [4Fe-4S] cluster.

It belongs to the quinolinate synthase family. Type 1 subfamily. Homodimer. Interacts in vitro with NFS2, CpNIFS3 and AO. Part of a Cys defulfurase complex. The cofactor is [4Fe-4S] cluster. Expressed in roots, leaves, stems and flowers.

The protein localises to the plastid. It localises to the chloroplast. The enzyme catalyses iminosuccinate + dihydroxyacetone phosphate = quinolinate + phosphate + 2 H2O + H(+). The protein operates within cofactor biosynthesis; NAD(+) biosynthesis; quinolinate from iminoaspartate: step 1/1. In terms of biological role, catalyzes the condensation of iminoaspartate with dihydroxyacetone phosphate to form quinolinate. Can complement nadA-deficient E.coli mutant. Essential for the de novo synthesis of NAD. Also participates in cysteine desulfurization mediated by NFS2. Can activate the cysteine desulfurase activity of NFS2 in vitro. The protein is Quinolinate synthase, chloroplastic of Arabidopsis thaliana (Mouse-ear cress).